The sequence spans 409 residues: Argininosuccinate synthase (409 aa).

ATP-binding positions include 8–16 (AYSGGLDTS) and A34. Y85 lines the L-citrulline pocket. Position 115 (G115) interacts with ATP. 3 residues coordinate L-aspartate: T117, N121, and D122. N121 contacts L-citrulline. Residues R125, S178, S187, E268, and Y280 each coordinate L-citrulline.

This sequence belongs to the argininosuccinate synthase family. Type 1 subfamily. Homotetramer.

The protein localises to the cytoplasm. The catalysed reaction is L-citrulline + L-aspartate + ATP = 2-(N(omega)-L-arginino)succinate + AMP + diphosphate + H(+). Its pathway is amino-acid biosynthesis; L-arginine biosynthesis; L-arginine from L-ornithine and carbamoyl phosphate: step 2/3. The protein is Argininosuccinate synthase of Thermotoga sp. (strain RQ2).